The chain runs to 133 residues: Large-conductance mechanosensitive channel (133 aa).

The next 2 helical transmembrane spans lie at 10-30 (FAMK…TAFG) and 76-96 (GNFI…FCVI).

The protein belongs to the MscL family. As to quaternary structure, homopentamer.

Its subcellular location is the cell inner membrane. Its function is as follows. Channel that opens in response to stretch forces in the membrane lipid bilayer. May participate in the regulation of osmotic pressure changes within the cell. In Campylobacter curvus (strain 525.92), this protein is Large-conductance mechanosensitive channel.